A 394-amino-acid polypeptide reads, in one-letter code: Phosphoglycerate kinase (394 aa).

Residues 21 to 23 (DFN), R36, 59 to 62 (HMGR), R118, and R151 contribute to the substrate site. ATP is bound by residues K202, E324, and 350–353 (GGDS).

The protein belongs to the phosphoglycerate kinase family. As to quaternary structure, monomer.

Its subcellular location is the cytoplasm. The enzyme catalyses (2R)-3-phosphoglycerate + ATP = (2R)-3-phospho-glyceroyl phosphate + ADP. The protein operates within carbohydrate degradation; glycolysis; pyruvate from D-glyceraldehyde 3-phosphate: step 2/5. The chain is Phosphoglycerate kinase from Exiguobacterium sibiricum (strain DSM 17290 / CCUG 55495 / CIP 109462 / JCM 13490 / 255-15).